Here is a 227-residue protein sequence, read N- to C-terminus: Cytochrome c oxidase subunit 2 (227 aa).

Topologically, residues 1 to 14 (MANHSQLGFQDASS) are mitochondrial intermembrane. A helical transmembrane segment spans residues 15-45 (PIMEELVEFHDHALMVALAICSLVLYLLTLM). Over 46–58 (LMEKLSSNTVDAQ) the chain is Mitochondrial matrix. A helical membrane pass occupies residues 59-86 (EVELIWTILPAIVLVLLALPSLQILYMM). At 87 to 227 (DEIDEPDLTL…FEAWSSLLSS (141 aa)) the chain is on the mitochondrial intermembrane side. Cu cation-binding residues include His-160, Cys-195, Glu-197, Cys-199, His-203, and Met-206. Glu-197 is a binding site for Mg(2+).

This sequence belongs to the cytochrome c oxidase subunit 2 family. Component of the cytochrome c oxidase (complex IV, CIV), a multisubunit enzyme composed of 14 subunits. The complex is composed of a catalytic core of 3 subunits MT-CO1, MT-CO2 and MT-CO3, encoded in the mitochondrial DNA, and 11 supernumerary subunits COX4I, COX5A, COX5B, COX6A, COX6B, COX6C, COX7A, COX7B, COX7C, COX8 and NDUFA4, which are encoded in the nuclear genome. The complex exists as a monomer or a dimer and forms supercomplexes (SCs) in the inner mitochondrial membrane with NADH-ubiquinone oxidoreductase (complex I, CI) and ubiquinol-cytochrome c oxidoreductase (cytochrome b-c1 complex, complex III, CIII), resulting in different assemblies (supercomplex SCI(1)III(2)IV(1) and megacomplex MCI(2)III(2)IV(2)). Found in a complex with TMEM177, COA6, COX18, COX20, SCO1 and SCO2. Interacts with TMEM177 in a COX20-dependent manner. Interacts with COX20. Interacts with COX16. It depends on Cu cation as a cofactor.

It is found in the mitochondrion inner membrane. It carries out the reaction 4 Fe(II)-[cytochrome c] + O2 + 8 H(+)(in) = 4 Fe(III)-[cytochrome c] + 2 H2O + 4 H(+)(out). Its function is as follows. Component of the cytochrome c oxidase, the last enzyme in the mitochondrial electron transport chain which drives oxidative phosphorylation. The respiratory chain contains 3 multisubunit complexes succinate dehydrogenase (complex II, CII), ubiquinol-cytochrome c oxidoreductase (cytochrome b-c1 complex, complex III, CIII) and cytochrome c oxidase (complex IV, CIV), that cooperate to transfer electrons derived from NADH and succinate to molecular oxygen, creating an electrochemical gradient over the inner membrane that drives transmembrane transport and the ATP synthase. Cytochrome c oxidase is the component of the respiratory chain that catalyzes the reduction of oxygen to water. Electrons originating from reduced cytochrome c in the intermembrane space (IMS) are transferred via the dinuclear copper A center (CU(A)) of subunit 2 and heme A of subunit 1 to the active site in subunit 1, a binuclear center (BNC) formed by heme A3 and copper B (CU(B)). The BNC reduces molecular oxygen to 2 water molecules using 4 electrons from cytochrome c in the IMS and 4 protons from the mitochondrial matrix. The polypeptide is Cytochrome c oxidase subunit 2 (MT-CO2) (Gallus gallus (Chicken)).